A 469-amino-acid polypeptide reads, in one-letter code: Interstitial collagenase (469 aa).

A signal peptide spans 1-19; the sequence is MHSFPPLLLLLFWGVVSHS. A propeptide spans 20 to 99 (activation peptide); it reads FPATLETQEQ…PRCGVPDVAQ (80 aa). Serine 57 is modified (phosphoserine). The Cysteine switch motif lies at 90-97; that stretch reads PRCGVPDV. Residue cysteine 92 coordinates Zn(2+). The interval 98-276 is metalloprotease; it reads AQFVLTEGNP…VQPIGPQTPK (179 aa). N-linked (GlcNAc...) asparagine glycosylation occurs at asparagine 120. Positions 124 and 158 each coordinate Ca(2+). 2 residues coordinate Zn(2+): histidine 168 and aspartate 170. The Ca(2+) site is built by aspartate 175, glycine 176, glycine 178, and asparagine 180. Histidine 183 serves as a coordination point for Zn(2+). The Ca(2+) site is built by glycine 190, glycine 192, and aspartate 194. Histidine 196 contacts Zn(2+). Residues aspartate 198, glutamate 199, and glutamate 201 each coordinate Ca(2+). Position 218 (histidine 218) interacts with Zn(2+). The active site involves glutamate 219. The Zn(2+) site is built by histidine 222 and histidine 228. Residue threonine 274 is modified to Phosphothreonine. 4 Hemopexin repeats span residues 275–324, 325–371, 374–422, and 423–466; these read PKAC…WPQL, PNGL…FGFP, VKHI…FPGI, and GHKV…WFNC. A disulfide bridge links cysteine 278 with cysteine 466. Aspartate 285 and glutamate 329 together coordinate Ca(2+). Tyrosine 360 bears the Phosphotyrosine; by PKDCC mark. The Ca(2+) site is built by aspartate 378 and aspartate 427.

The protein belongs to the peptidase M10A family. As to quaternary structure, (Microbial infection) Interacts with HIV-1 Tat. Ca(2+) serves as cofactor. Requires Zn(2+) as cofactor. In terms of processing, undergoes autolytic cleavage to two major forms (22 kDa and 27 kDa). A minor form (25 kDa) is the glycosylated form of the 22 kDa form. The 27 kDa form has no activity while the 22/25 kDa form can act as activator for collagenase. Post-translationally, tyrosine phosphorylated in platelets by PKDCC/VLK.

The protein localises to the secreted. It localises to the extracellular space. It is found in the extracellular matrix. The enzyme catalyses Cleavage of the triple helix of collagen at about three-quarters of the length of the molecule from the N-terminus, at 775-Gly-|-Ile-776 in the alpha1(I) chain. Cleaves synthetic substrates and alpha-macroglobulins at bonds where P1' is a hydrophobic residue.. Can be activated without removal of the activation peptide. Cleaves collagens of types I, II, and III at one site in the helical domain. Also cleaves collagens of types VII and X. In case of HIV infection, interacts and cleaves the secreted viral Tat protein, leading to a decrease in neuronal Tat's mediated neurotoxicity. In Homo sapiens (Human), this protein is Interstitial collagenase (MMP1).